The chain runs to 304 residues: UDP-N-acetylenolpyruvoylglucosamine reductase (304 aa).

The FAD-binding PCMH-type domain maps to 33–198 (RVGGPADILV…IEATVELESG (166 aa)). Residue Arg-177 is part of the active site. The active-site Proton donor is the Ser-227. Glu-297 is an active-site residue.

It belongs to the MurB family. FAD is required as a cofactor.

Its subcellular location is the cytoplasm. It catalyses the reaction UDP-N-acetyl-alpha-D-muramate + NADP(+) = UDP-N-acetyl-3-O-(1-carboxyvinyl)-alpha-D-glucosamine + NADPH + H(+). The protein operates within cell wall biogenesis; peptidoglycan biosynthesis. Functionally, cell wall formation. The sequence is that of UDP-N-acetylenolpyruvoylglucosamine reductase from Clostridium perfringens (strain ATCC 13124 / DSM 756 / JCM 1290 / NCIMB 6125 / NCTC 8237 / Type A).